Consider the following 395-residue polypeptide: ATP phosphoribosyltransferase regulatory subunit (395 aa).

This sequence belongs to the class-II aminoacyl-tRNA synthetase family. HisZ subfamily. As to quaternary structure, heteromultimer composed of HisG and HisZ subunits.

Its subcellular location is the cytoplasm. It participates in amino-acid biosynthesis; L-histidine biosynthesis; L-histidine from 5-phospho-alpha-D-ribose 1-diphosphate: step 1/9. Required for the first step of histidine biosynthesis. May allow the feedback regulation of ATP phosphoribosyltransferase activity by histidine. The chain is ATP phosphoribosyltransferase regulatory subunit from Thioalkalivibrio sulfidiphilus (strain HL-EbGR7).